Reading from the N-terminus, the 245-residue chain is Glutathione S-transferase F4 (245 aa).

The GST N-terminal domain maps to 25–106 (AGYKVHGDPF…YIAYVHSSRG (82 aa)). Residues 35–36 (ST), 64–65 (HK), 77–78 (QV), and 90–91 (ES) each bind glutathione. The 131-residue stretch at 114-244 (SHETMATLTM…QEKSWFNKPR (131 aa)) folds into the GST C-terminal domain.

Belongs to the GST superfamily. Phi family.

The protein localises to the cytoplasm. It is found in the cytosol. It carries out the reaction RX + glutathione = an S-substituted glutathione + a halide anion + H(+). Functionally, may be involved in the conjugation of reduced glutathione to a wide number of exogenous and endogenous hydrophobic electrophiles and have a detoxification role against certain herbicides. This is Glutathione S-transferase F4 (GSTF4) from Arabidopsis thaliana (Mouse-ear cress).